The primary structure comprises 499 residues: Kynurenine 3-monooxygenase 3 (499 aa).

Belongs to the aromatic-ring hydroxylase family. KMO subfamily. It depends on FAD as a cofactor.

It is found in the mitochondrion outer membrane. It catalyses the reaction L-kynurenine + NADPH + O2 + H(+) = 3-hydroxy-L-kynurenine + NADP(+) + H2O. Its pathway is cofactor biosynthesis; NAD(+) biosynthesis; quinolinate from L-kynurenine: step 1/3. In terms of biological role, catalyzes the hydroxylation of L-kynurenine (L-Kyn) to form 3-hydroxy-L-kynurenine (L-3OHKyn). Required for synthesis of quinolinic acid. The chain is Kynurenine 3-monooxygenase 3 (bna4-3) from Aspergillus niger (strain ATCC MYA-4892 / CBS 513.88 / FGSC A1513).